A 191-amino-acid polypeptide reads, in one-letter code: Elongation factor P (191 aa).

An N6-(3,6-diaminohexanoyl)-5-hydroxylysine modification is found at lysine 34.

This sequence belongs to the elongation factor P family. Post-translationally, may be beta-lysylated on the epsilon-amino group of Lys-34 by the combined action of EpmA and EpmB, and then hydroxylated on the C5 position of the same residue by EpmC (if this protein is present). Lysylation is critical for the stimulatory effect of EF-P on peptide-bond formation. The lysylation moiety may extend toward the peptidyltransferase center and stabilize the terminal 3-CCA end of the tRNA. Hydroxylation of the C5 position on Lys-34 may allow additional potential stabilizing hydrogen-bond interactions with the P-tRNA.

The protein resides in the cytoplasm. Its pathway is protein biosynthesis; polypeptide chain elongation. Functionally, involved in peptide bond synthesis. Alleviates ribosome stalling that occurs when 3 or more consecutive Pro residues or the sequence PPG is present in a protein, possibly by augmenting the peptidyl transferase activity of the ribosome. Modification of Lys-34 is required for alleviation. The protein is Elongation factor P of Psychrobacter sp. (strain PRwf-1).